The primary structure comprises 239 residues: MHEQRRGIVRVDRFLELHRRLLVGVLVAILGGLGLSAGCLLVMTRLRARASAEVTRIAREWDVLRKPDNTVSASGHEVEGRGGSSIRAKEDALLARLESCASSPWRDGFAYAYAQACVADIFFARKEWEKAQQAYVRAAYGARRSYVAGVYYFNAASCADERGRFEEARELYQRSARVQDFPLVPRALFNVGRMEEALGRAAAATAAYMQLYERFPLNGWAALGKSRAIAISVGGGRAQ.

The helical transmembrane segment at 21 to 43 threads the bilayer; sequence LLVGVLVAILGGLGLSAGCLLVM. TPR repeat units follow at residues 112–145 and 149–182; these read AYAQ…ARRS and GVYY…QDFP.

The protein localises to the cell membrane. This chain is TPR repeat-containing protein TP_0282, found in Treponema pallidum (strain Nichols).